Reading from the N-terminus, the 428-residue chain is AA14 family lytic polysaccharide monooxygenase A (428 aa).

Residues 1–21 (MLRSLPASLALVAAFASKASA) form the signal peptide. N-linked (GlcNAc...) asparagine glycosylation is found at Asn34 and Asn52. 5 cysteine pairs are disulfide-bonded: Cys88-Cys112, Cys131-Cys158, Cys174-Cys179, Cys181-Cys203, and Cys223-Cys239. The N-linked (GlcNAc...) asparagine glycan is linked to Asn155. Disordered regions lie at residues 216–239 (KPAV…PGNC) and 292–428 (SSGT…HNAH). Over residues 223–232 (CGADPDHGKP) the composition is skewed to basic and acidic residues. N-linked (GlcNAc...) asparagine glycosylation is present at Asn238. Residues 292 to 379 (SSGTGSSPTS…SVATEASSSP (88 aa)) are compositionally biased toward low complexity. Positions 380–402 (IASTTVDEAVVSSSTVGSINPTR) are enriched in polar residues. Over residues 414–428 (QKKKRKHARHLHNAH) the composition is skewed to basic residues.

It depends on Cu(2+) as a cofactor.

It localises to the secreted. Functionally, lytic polysaccharide monooxygenase (LPMO) showing oxidase and peroxidase activities that are common for LPMOs. Catalysis by LPMOs requires the reduction of the active-site copper from Cu(II) to Cu(I) by a reducing agent and H(2)O(2) or O(2) as a cosubstrate. Shows no activity on cellulose-associated xylan or any other tested polysaccharide substrate, meaning that the substrate rremains unknown. This is AA14 family lytic polysaccharide monooxygenase A from Trametes coccinea (strain BRFM310) (Pycnoporus coccineus).